Consider the following 85-residue polypeptide: U4-theraphotoxin-Hhn1l (85 aa).

An N-terminal signal peptide occupies residues 1 to 22; that stretch reads MKVTLIAFLTCAAVLVLHTTAA. Residues 23–48 constitute a propeptide that is removed on maturation; that stretch reads EELEAESQLMGVGMPDTELAAVDEER. 3 cysteine pairs are disulfide-bonded: Cys52-Cys66, Cys56-Cys77, and Cys71-Cys82.

Belongs to the neurotoxin 12 (Hwtx-2) family. 02 (Hwtx-2) subfamily. As to expression, expressed by the venom gland.

The protein resides in the secreted. Postsynaptic neurotoxin. This Cyriopagopus hainanus (Chinese bird spider) protein is U4-theraphotoxin-Hhn1l.